Consider the following 439-residue polypeptide: Mitochondrial distribution and morphology protein 12 (439 aa).

Residues 1-439 (MSIDVNWRSA…VYPSFWTFLI (439 aa)) enclose the SMP-LTD domain. Residues 70 to 85 (YEEDDDDHTSDASEEL) show a composition bias toward acidic residues. Disordered stretches follow at residues 70–102 (YEEDDDDHTSDASEELGSEHSSQWNRTHPELNE), 184–274 (SGWS…PPRM), and 353–386 (GSEQQQQQESAGDDHRPQSRPDSSASASQKRHGG). Positions 197–212 (GRSERHAGMKHQRAEP) are enriched in basic and acidic residues. Residues 215–230 (DTSNSTSRPSTANTLP) are compositionally biased toward polar residues. Over residues 231–240 (SHPSSSSKNS) the composition is skewed to low complexity. Residues 247-261 (RNDHPSLHAGEHIED) are compositionally biased toward basic and acidic residues.

This sequence belongs to the MDM12 family. In terms of assembly, component of the ER-mitochondria encounter structure (ERMES) or MDM complex, composed of mmm1, mdm10, mdm12 and mdm34. A mmm1 homodimer associates with one molecule of mdm12 on each side in a pairwise head-to-tail manner, and the SMP-LTD domains of mmm1 and mdm12 generate a continuous hydrophobic tunnel for phospholipid trafficking.

The protein resides in the mitochondrion outer membrane. Its subcellular location is the endoplasmic reticulum membrane. Component of the ERMES/MDM complex, which serves as a molecular tether to connect the endoplasmic reticulum (ER) and mitochondria. Components of this complex are involved in the control of mitochondrial shape and protein biogenesis, and function in nonvesicular lipid trafficking between the ER and mitochondria. Mdm12 is required for the interaction of the ER-resident membrane protein mmm1 and the outer mitochondrial membrane-resident beta-barrel protein mdm10. The mdm12-mmm1 subcomplex functions in the major beta-barrel assembly pathway that is responsible for biogenesis of all mitochondrial outer membrane beta-barrel proteins, and acts in a late step after the SAM complex. The mdm10-mdm12-mmm1 subcomplex further acts in the TOM40-specific pathway after the action of the mdm12-mmm1 complex. Essential for establishing and maintaining the structure of mitochondria and maintenance of mtDNA nucleoids. The sequence is that of Mitochondrial distribution and morphology protein 12 from Neosartorya fischeri (strain ATCC 1020 / DSM 3700 / CBS 544.65 / FGSC A1164 / JCM 1740 / NRRL 181 / WB 181) (Aspergillus fischerianus).